The following is a 216-amino-acid chain: Ribosomal RNA large subunit methyltransferase E (216 aa).

S-adenosyl-L-methionine contacts are provided by Gly-67, Trp-69, Asp-87, Asp-103, and Asp-128. Lys-168 serves as the catalytic Proton acceptor.

It belongs to the class I-like SAM-binding methyltransferase superfamily. RNA methyltransferase RlmE family.

The protein localises to the cytoplasm. It carries out the reaction uridine(2552) in 23S rRNA + S-adenosyl-L-methionine = 2'-O-methyluridine(2552) in 23S rRNA + S-adenosyl-L-homocysteine + H(+). Specifically methylates the uridine in position 2552 of 23S rRNA at the 2'-O position of the ribose in the fully assembled 50S ribosomal subunit. This Acinetobacter baumannii (strain AB307-0294) protein is Ribosomal RNA large subunit methyltransferase E.